The sequence spans 324 residues: GDP-mannose transporter (324 aa).

The Cytoplasmic portion of the chain corresponds to 1-13; that stretch reads MSELKSRIGNSGS. A helical transmembrane segment spans residues 14–34; that stretch reads IANSGPVSILCYCASSILMTV. The Lumenal portion of the chain corresponds to 35–44; the sequence is TNKFVVNTDG. The chain crosses the membrane as a helical span at residues 45 to 65; the sequence is FNMFFVMLFAQSLVCTMCLMV. The Cytoplasmic portion of the chain corresponds to 66–76; sequence LKMFGYAKYRP. The chain crosses the membrane as a helical span at residues 77 to 97; sequence LNLIDVKNWLPISFLLVFMIF. The Lumenal portion of the chain corresponds to 98–116; that stretch reads TSAKALKYMPVPIYTIFKN. A glycan (N-linked (GlcNAc...) asparagine) is linked at asparagine 116. Residues 117 to 137 traverse the membrane as a helical segment; sequence LTIILIAYGEVLFFGGSVTPM. Residue glutamate 138 is a topological domain, cytoplasmic. A helical transmembrane segment spans residues 139 to 159; it reads LSSFILMVLSSVVASLGDQQA. The Lumenal portion of the chain corresponds to 160–170; sequence AKIAQPLANNS. A glycan (N-linked (GlcNAc...) asparagine) is linked at asparagine 168. The helical transmembrane segment at 171 to 191 threads the bilayer; sequence ILSPEYYWMFLNCICSASFVL. The Cytoplasmic segment spans residues 192 to 204; it reads IMRKRIKLTNFKD. Residues 205 to 225 form a helical membrane-spanning segment; that stretch reads YDTMFYNNALALPILLGFSFL. The Lumenal segment spans residues 226–243; sequence SEDWSSENLAQNFSGESL. Residue asparagine 237 is glycosylated (N-linked (GlcNAc...) asparagine). A helical transmembrane segment spans residues 244–264; that stretch reads SAMIISGMTSVGISYCSGWCV. The Cytoplasmic portion of the chain corresponds to 265–270; the sequence is RATSST. Residues 271–291 form a helical membrane-spanning segment; the sequence is TYSMVGALNKLPIALAGLIFF. Residues 292-295 are Lumenal-facing; it reads DAPR. A helical membrane pass occupies residues 296–316; the sequence is NFLSIMSIFIGFASGLSYAVA. Over 317–324 the chain is Cytoplasmic; that stretch reads KQKKVQKN.

It belongs to the TPT transporter family. SLC35D subfamily. In terms of assembly, homooligomer.

It localises to the golgi apparatus membrane. The protein localises to the cytoplasmic vesicle membrane. The protein resides in the endoplasmic reticulum membrane. Functionally, involved in the import of GDP-mannose from the cytoplasm into the Golgi lumen. This is GDP-mannose transporter (VRG4) from Candida glabrata (strain ATCC 2001 / BCRC 20586 / JCM 3761 / NBRC 0622 / NRRL Y-65 / CBS 138) (Yeast).